The sequence spans 411 residues: Glycerol-3-phosphate dehydrogenase [NAD(+)] (411 aa).

Residues 71–76, phenylalanine 103, and phenylalanine 159 each bind NAD(+); that span reads GSGNWG. Lysine 182 serves as a coordination point for substrate. NAD(+) is bound at residue alanine 215. The active-site Proton acceptor is the lysine 275. NAD(+) is bound by residues arginine 340 and glutamine 369. 340-341 contributes to the substrate binding site; that stretch reads RN.

Belongs to the NAD-dependent glycerol-3-phosphate dehydrogenase family.

The catalysed reaction is sn-glycerol 3-phosphate + NAD(+) = dihydroxyacetone phosphate + NADH + H(+). This Lachancea thermotolerans (Yeast) protein is Glycerol-3-phosphate dehydrogenase [NAD(+)] (GPD).